A 382-amino-acid chain; its full sequence is Succinate--CoA ligase [ADP-forming] subunit beta (382 aa).

The ATP-grasp domain maps to 9–240 (KELFSKYGVK…PRDVSEFEMY (232 aa)). Residues Lys-45, 52 to 54 (GRG), Val-94, and Glu-99 each bind ATP. The Mg(2+) site is built by Asn-193 and Asp-207. Residues Asn-260 and 317–319 (GIT) each bind substrate.

The protein belongs to the succinate/malate CoA ligase beta subunit family. As to quaternary structure, heterotetramer of two alpha and two beta subunits. Requires Mg(2+) as cofactor.

It catalyses the reaction succinate + ATP + CoA = succinyl-CoA + ADP + phosphate. The enzyme catalyses GTP + succinate + CoA = succinyl-CoA + GDP + phosphate. It participates in carbohydrate metabolism; tricarboxylic acid cycle; succinate from succinyl-CoA (ligase route): step 1/1. Its function is as follows. Succinyl-CoA synthetase functions in the citric acid cycle (TCA), coupling the hydrolysis of succinyl-CoA to the synthesis of either ATP or GTP and thus represents the only step of substrate-level phosphorylation in the TCA. The beta subunit provides nucleotide specificity of the enzyme and binds the substrate succinate, while the binding sites for coenzyme A and phosphate are found in the alpha subunit. This chain is Succinate--CoA ligase [ADP-forming] subunit beta, found in Pyrobaculum arsenaticum (strain DSM 13514 / JCM 11321 / PZ6).